Reading from the N-terminus, the 104-residue chain is Large ribosomal subunit protein uL24 (104 aa).

The protein belongs to the universal ribosomal protein uL24 family. As to quaternary structure, part of the 50S ribosomal subunit.

One of two assembly initiator proteins, it binds directly to the 5'-end of the 23S rRNA, where it nucleates assembly of the 50S subunit. Its function is as follows. One of the proteins that surrounds the polypeptide exit tunnel on the outside of the subunit. This chain is Large ribosomal subunit protein uL24, found in Rhodopseudomonas palustris (strain BisB5).